The primary structure comprises 123 residues: Maintenance of telomere capping protein 3, mitochondrial (123 aa).

The transit peptide at 1 to 37 (MMGRNGIRLALKRSFSTYQPPVVEITNITKLWPTLRP) directs the protein to the mitochondrion.

It localises to the mitochondrion. Its function is as follows. May be involved in telomere capping. This is Maintenance of telomere capping protein 3, mitochondrial (MTC3) from Saccharomyces cerevisiae (strain ATCC 204508 / S288c) (Baker's yeast).